We begin with the raw amino-acid sequence, 407 residues long: Histone acetyltransferase mst2 (407 aa).

In terms of domain architecture, MYST-type HAT spans 98–372 (PQPTSIRYLY…VNPKLLRWTP (275 aa)). Residues 131-156 (LYICESCLKYMNSDHVLQRHKMKCSW) form a C2HC MYST-type zinc finger. K198 bears the N6-acetyllysine; by autocatalysis mark. Acetyl-CoA is bound by residues 241 to 243 (ILT), T243, and 248 to 254 (QRRGYGV). The active-site Proton donor/acceptor is E274. Positions 278 and 287 each coordinate acetyl-CoA.

It belongs to the MYST (SAS/MOZ) family. As to quaternary structure, component of the mst2 complex composed of at least eaf6, mst2, nto1, pdp3, ptf1, ptf2 and tfg3. Autoacetylation at Lys-198 is required for proper function.

It is found in the cytoplasm. It localises to the nucleus. The catalysed reaction is L-lysyl-[protein] + acetyl-CoA = N(6)-acetyl-L-lysyl-[protein] + CoA + H(+). Its function is as follows. Component of the mst2 complex which is a highly specific H3 lysine 14 (H3K14) acetyltransferase that functions together with gcn5 to regulate global levels of H3K14 acetylation (H3K14ac), critical for DNA damage checkpoint activation. Negatively regulates telomere silencing. Telomere silencing is increased due to histone hypoacetylation and/or an increase in the ratio of methylated histones to acetylated histones. Telomeric histone acetylation contributes to normal meiotic progression. The sequence is that of Histone acetyltransferase mst2 (mst2) from Schizosaccharomyces pombe (strain 972 / ATCC 24843) (Fission yeast).